We begin with the raw amino-acid sequence, 347 residues long: NADH-ubiquinone oxidoreductase chain 2 (347 aa).

A run of 10 helical transmembrane segments spans residues 1 to 21 (MNPL…AIVA), 25 to 45 (HWLM…PILM), 59 to 79 (YFLT…MNLV), 111 to 131 (FHFW…LILL), 149 to 169 (INLD…GWGG), 178 to 198 (IMAY…AYNP), 201 to 221 (TLLN…MFML), 237 to 257 (MPLL…LPPL), 276 to 296 (VILP…YMRL), and 326 to 346 (LSPL…LALL).

This sequence belongs to the complex I subunit 2 family. As to quaternary structure, core subunit of respiratory chain NADH dehydrogenase (Complex I) which is composed of 45 different subunits. Interacts with TMEM242.

The protein resides in the mitochondrion inner membrane. The enzyme catalyses a ubiquinone + NADH + 5 H(+)(in) = a ubiquinol + NAD(+) + 4 H(+)(out). Functionally, core subunit of the mitochondrial membrane respiratory chain NADH dehydrogenase (Complex I) which catalyzes electron transfer from NADH through the respiratory chain, using ubiquinone as an electron acceptor. Essential for the catalytic activity and assembly of complex I. The sequence is that of NADH-ubiquinone oxidoreductase chain 2 from Pteropus pumilus (Little golden-mantled flying fox).